Reading from the N-terminus, the 601-residue chain is ATP-dependent lipid A-core flippase (601 aa).

The region spanning 28–328 is the ABC transmembrane type-1 domain; it reads LLSVVGLIVY…LTRVNAEFQR (301 aa). 6 consecutive transmembrane segments (helical) span residues 32 to 52, 81 to 101, 160 to 180, 183 to 203, 267 to 287, and 296 to 316; these read VGLI…GPFI, VLLM…FANF, ALIS…LMFY, WKLS…ITIV, AVSQ…VLYA, and DLTA…LQPI. An ABC transporter domain is found at 360–597; sequence LRFDNVSFSY…GGMYAKLYQM (238 aa). 394-401 lines the ATP pocket; the sequence is GRSGSGKS.

It belongs to the ABC transporter superfamily. Lipid exporter (TC 3.A.1.106) family. In terms of assembly, homodimer.

It is found in the cell inner membrane. The enzyme catalyses ATP + H2O + lipid A-core oligosaccharideSide 1 = ADP + phosphate + lipid A-core oligosaccharideSide 2.. In terms of biological role, involved in lipopolysaccharide (LPS) biosynthesis. Translocates lipid A-core from the inner to the outer leaflet of the inner membrane. Transmembrane domains (TMD) form a pore in the inner membrane and the ATP-binding domain (NBD) is responsible for energy generation. This Shewanella oneidensis (strain ATCC 700550 / JCM 31522 / CIP 106686 / LMG 19005 / NCIMB 14063 / MR-1) protein is ATP-dependent lipid A-core flippase.